The following is an 829-amino-acid chain: pre-rRNA 2'-O-ribose RNA methyltransferase FTSJ3 (829 aa).

S-adenosyl-L-methionine-binding residues include G56, W58, D76, D92, and D117. The active-site Proton acceptor is K157. Residues 332–367 (ISLSSEEEGDEEESAAETKQASEEEEEREEEEQLNR) form a disordered region. Phosphoserine occurs at positions 333, 335, 336, 345, and 353. Over residues 336-346 (SEEEGDEEESA) the composition is skewed to acidic residues. The span at 354–363 (EEEEEREEEE) shows a compositional bias: acidic residues. R389 is subject to Citrulline. Disordered stretches follow at residues 443–508 (FLSD…PLLV) and 528–634 (DGFS…GFEV). The span at 456-473 (DAEDDDDTSLESDLDPEE) shows a compositional bias: acidic residues. 2 positions are modified to phosphoserine: S531 and S544. K570 is covalently cross-linked (Glycyl lysine isopeptide (Lys-Gly) (interchain with G-Cter in SUMO2)). Position 575 is a phosphoserine (S575). Glycyl lysine isopeptide (Lys-Gly) (interchain with G-Cter in SUMO2) cross-links involve residues K626 and K642. The residue at position 659 (S659) is a Phosphoserine. A Glycyl lysine isopeptide (Lys-Gly) (interchain with G-Cter in SUMO2) cross-link involves residue K661. S671 is subject to Phosphoserine. K693 is covalently cross-linked (Glycyl lysine isopeptide (Lys-Gly) (interchain with G-Cter in SUMO2)). Residues 722–760 (IKKVAEAKARKKRRMLKKLEQTKKKAEAVVNTVDISERE) adopt a coiled-coil conformation. R766 bears the Citrulline mark. Positions 794-804 (VRRPAGVRGHF) are enriched in basic residues. The segment at 794–829 (VRRPAGVRGHFKVVDSRMKKDQRAQRKEQKRNHRRK) is disordered. The span at 805–820 (KVVDSRMKKDQRAQRK) shows a compositional bias: basic and acidic residues.

Belongs to the class I-like SAM-binding methyltransferase superfamily. RNA methyltransferase RlmE family. SPB1 subfamily. Interacts with NIP7. Post-translationally, citrullinated by PADI4.

It is found in the nucleus. It localises to the nucleolus. The enzyme catalyses a ribonucleotide in rRNA + S-adenosyl-L-methionine = a 2'-O-methylribonucleotide in rRNA + S-adenosyl-L-homocysteine + H(+). RNA 2'-O-methyltransferase involved in the processing of the 34S pre-rRNA to 18S rRNA and in 40S ribosomal subunit formation. The chain is pre-rRNA 2'-O-ribose RNA methyltransferase FTSJ3 (Ftsj3) from Rattus norvegicus (Rat).